Here is a 313-residue protein sequence, read N- to C-terminus: UDP-N-acetylglucosamine 3-dehydrogenase (313 aa).

NAD(+)-binding residues include H13, L14, and R38.

It belongs to the Gfo/Idh/MocA family. As to quaternary structure, exists in multiple oligomeric states.

The enzyme catalyses UDP-N-acetyl-alpha-D-glucosamine + NAD(+) = UDP-2-acetamido-3-dehydro-2-deoxy-alpha-D-glucopyranose + NADH + H(+). The protein operates within bacterial outer membrane biogenesis; LPS lipid A biosynthesis. Oxidoreductase involved in the synthesis of 2,3-diamino-2,3-dideoxy-D-glucopyranose (GlcN3N), which is a component of lipid A in some species. Catalyzes the NAD(+)-dependent oxidation of the glucosamine 3-position of UDP-N-acetyl-glucosamine (UDP-GlcNAc) to a ketone moiety, forming UDP-2-acetamido-3-dehydro-2-deoxy-alpha-D-glucopyranose (UDP-3-oxo-GlcNAc). Is specific for UDP-GlcNAc, no activity is observed with UDP-glucose (UDP-Glc), UDP-glucoronic acid (UDP-GlcA), UDP-galactose (UDP-Gal) and UDP-N-acetylgalactosamine (UDP-GalNAc). Cannot use FAD(+) and NADP(+). The sequence is that of UDP-N-acetylglucosamine 3-dehydrogenase from Acidithiobacillus ferrooxidans (strain ATCC 23270 / DSM 14882 / CIP 104768 / NCIMB 8455) (Ferrobacillus ferrooxidans (strain ATCC 23270)).